Here is a 546-residue protein sequence, read N- to C-terminus: CTP synthase (546 aa).

Positions 1–266 (MTTRYIFVTG…DQLVTKRFGI (266 aa)) are amidoligase domain. Position 14 (Ser14) interacts with CTP. Ser14 contacts UTP. Residues 15–20 (SLGKGI) and Asp72 each bind ATP. Residues Asp72 and Glu140 each coordinate Mg(2+). Residues 147-149 (DIE), 187-192 (KTKPTQ), and Lys223 contribute to the CTP site. UTP-binding positions include 187-192 (KTKPTQ) and Lys223. 239 to 241 (KDV) is an ATP binding site. In terms of domain architecture, Glutamine amidotransferase type-1 spans 291-542 (TIGMVGKYIE…VAAAAAYQKR (252 aa)). Gly352 is an L-glutamine binding site. Cys379 serves as the catalytic Nucleophile; for glutamine hydrolysis. Residues 380 to 383 (LGMQ), Glu403, and Arg470 each bind L-glutamine. Catalysis depends on residues His515 and Glu517.

The protein belongs to the CTP synthase family. Homotetramer.

It carries out the reaction UTP + L-glutamine + ATP + H2O = CTP + L-glutamate + ADP + phosphate + 2 H(+). The catalysed reaction is L-glutamine + H2O = L-glutamate + NH4(+). It catalyses the reaction UTP + NH4(+) + ATP = CTP + ADP + phosphate + 2 H(+). Its pathway is pyrimidine metabolism; CTP biosynthesis via de novo pathway; CTP from UDP: step 2/2. Allosterically activated by GTP, when glutamine is the substrate; GTP has no effect on the reaction when ammonia is the substrate. The allosteric effector GTP functions by stabilizing the protein conformation that binds the tetrahedral intermediate(s) formed during glutamine hydrolysis. Inhibited by the product CTP, via allosteric rather than competitive inhibition. Functionally, catalyzes the ATP-dependent amination of UTP to CTP with either L-glutamine or ammonia as the source of nitrogen. Regulates intracellular CTP levels through interactions with the four ribonucleotide triphosphates. This Shewanella pealeana (strain ATCC 700345 / ANG-SQ1) protein is CTP synthase.